Consider the following 278-residue polypeptide: Glutamate racemase (278 aa).

Substrate is bound by residues 13–14 (DS) and 45–46 (YG). Cys-76 acts as the Proton donor/acceptor in catalysis. 77–78 (NT) lines the substrate pocket. The active-site Proton donor/acceptor is Cys-185. 186 to 187 (TH) contacts substrate.

The protein belongs to the aspartate/glutamate racemases family.

The catalysed reaction is L-glutamate = D-glutamate. Its pathway is cell wall biogenesis; peptidoglycan biosynthesis. In terms of biological role, provides the (R)-glutamate required for cell wall biosynthesis. The protein is Glutamate racemase of Gloeothece citriformis (strain PCC 7424) (Cyanothece sp. (strain PCC 7424)).